Consider the following 495-residue polypeptide: Glucose-6-phosphate 1-dehydrogenase (495 aa).

Residue K51 forms an Isoglutamyl lysine isopeptide (Lys-Gln) (interchain with Q-Cter in protein Pup) linkage. NADP(+) is bound by residues 94–95 (DL) and K154. Substrate is bound by residues H184, K188, E222, and D241. The active-site Proton acceptor is the H246. Residue K345 participates in substrate binding.

The protein belongs to the glucose-6-phosphate dehydrogenase family.

It carries out the reaction D-glucose 6-phosphate + NADP(+) = 6-phospho-D-glucono-1,5-lactone + NADPH + H(+). The protein operates within carbohydrate degradation; pentose phosphate pathway; D-ribulose 5-phosphate from D-glucose 6-phosphate (oxidative stage): step 1/3. In terms of biological role, catalyzes the oxidation of glucose 6-phosphate to 6-phosphogluconolactone. The sequence is that of Glucose-6-phosphate 1-dehydrogenase from Mycolicibacterium smegmatis (strain ATCC 700084 / mc(2)155) (Mycobacterium smegmatis).